The primary structure comprises 77 residues: Acyl carrier protein (77 aa).

A Carrier domain is found at 2–77 (ADTLSRITKI…DVVEYIEGRQ (76 aa)). Ser37 is modified (O-(pantetheine 4'-phosphoryl)serine).

The protein belongs to the acyl carrier protein (ACP) family. 4'-phosphopantetheine is transferred from CoA to a specific serine of apo-ACP by AcpS. This modification is essential for activity because fatty acids are bound in thioester linkage to the sulfhydryl of the prosthetic group.

It localises to the cytoplasm. It functions in the pathway lipid metabolism; fatty acid biosynthesis. In terms of biological role, carrier of the growing fatty acid chain in fatty acid biosynthesis. This chain is Acyl carrier protein, found in Halalkalibacterium halodurans (strain ATCC BAA-125 / DSM 18197 / FERM 7344 / JCM 9153 / C-125) (Bacillus halodurans).